Here is a 1004-residue protein sequence, read N- to C-terminus: Outer cell wall protein (1004 aa).

The first 24 residues, Met1–Ala24, serve as a signal peptide directing secretion.

In terms of assembly, the outer cell wall layer is composed of subunits of the outer cell wall protein. These proteins form a hexagonal array with a lattice constant of 14.5 nm in the outer cell wall layers.

The protein localises to the secreted. The protein resides in the cell wall. Its subcellular location is the S-layer. The outer wall protein binds to the middle cell wall protein. In Brevibacillus brevis (strain 47 / JCM 6285 / NBRC 100599), this protein is Outer cell wall protein.